The chain runs to 825 residues: Heterogeneous nuclear ribonucleoprotein U (825 aa).

The residue at position 2 (serine 2) is an N-acetylserine; partial. Phosphoserine is present on serine 4. The SAP domain occupies 8-42 (VKKLKVSELKEELKKRRLSDKGLKAELMERLQAAL). N6-acetyllysine occurs at positions 17 and 21. The segment at 41–281 (ALDDEEAGGR…PQPPVEEEDE (241 aa)) is disordered. Position 59 is a phosphoserine; by PLK1 (serine 59). Serine 66 bears the Phosphoserine mark. Positions 72–81 (AGLEQEAAAG) are enriched in low complexity. Composition is skewed to acidic residues over residues 82–95 (GDEE…EEEG), 120–134 (PMEE…ENGD), and 140–153 (EGED…EGAG). Low complexity predominate over residues 159–178 (GEQQPQPPATQQQQPQQQRG). The residue at position 186 (lysine 186) is an N6-acetyllysine. Serine 187 bears the ADP-ribosylserine mark. The segment covering 199–211 (APPGARQGQQQAG) has biased composition (low complexity). Lysine 215 is subject to N6-acetyllysine. Positions 233 to 266 (GKTEQKGGDKKRGVKRPREDHGRGYFEYIEENKY) are enriched in basic and acidic residues. At arginine 255 the chain carries Citrulline. At lysine 265 the chain carries N6-acetyllysine; alternate. Lysine 265 is covalently cross-linked (Glycyl lysine isopeptide (Lys-Gly) (interchain with G-Cter in SUMO1); alternate). Lysine 265 participates in a covalent cross-link: Glycyl lysine isopeptide (Lys-Gly) (interchain with G-Cter in SUMO2); alternate. At tyrosine 266 the chain carries Phosphotyrosine. Residues serine 267 and serine 271 each carry the phosphoserine modification. One can recognise a B30.2/SPRY domain in the interval 267-464 (SRAKSPQPPV…VEFNFGQKEK (198 aa)). The residue at position 286 (threonine 286) is a Phosphothreonine. N6-acetyllysine is present on lysine 352. Residues 488-672 (PKGPEEKKDC…QKLLEQYKEE (185 aa)) form an ATPase domain region. Lysine 495 is covalently cross-linked (Glycyl lysine isopeptide (Lys-Gly) (interchain with G-Cter in SUMO2)). 504–511 (GLPGAGKT) contacts ATP. 2 positions are modified to N6-acetyllysine; alternate: lysine 516 and lysine 524. Glycyl lysine isopeptide (Lys-Gly) (interchain with G-Cter in SUMO2); alternate cross-links involve residues lysine 516 and lysine 524. Threonine 532 bears the Phosphothreonine mark. Lysine 536 is covalently cross-linked (Glycyl lysine isopeptide (Lys-Gly) (interchain with G-Cter in SUMO2)). Lysine 551 bears the N6-acetyllysine mark. Residue lysine 565 is modified to N6-acetyllysine; alternate. Lysine 565 participates in a covalent cross-link: Glycyl lysine isopeptide (Lys-Gly) (interchain with G-Cter in SUMO2); alternate. A Glycyl lysine isopeptide (Lys-Gly) (interchain with G-Cter in SUMO2) cross-link involves residue lysine 574. Position 582 is a phosphothreonine (threonine 582). Residues lysine 609 and lysine 626 each participate in a glycyl lysine isopeptide (Lys-Gly) (interchain with G-Cter in SUMO2) cross-link. Residues 611 to 626 (EDYKQRTQKKAEVEGK) form an actin-binding region. Lysine 635 is subject to N6-acetyllysine; alternate. A Glycyl lysine isopeptide (Lys-Gly) (interchain with G-Cter in SUMO2); alternate cross-link involves residue lysine 635. Residues lysine 664 and lysine 670 each participate in a glycyl lysine isopeptide (Lys-Gly) (interchain with G-Cter in SUMO2) cross-link. The span at 671 to 683 (EESKKALPPEKKQ) shows a compositional bias: basic and acidic residues. The disordered stretch occupies residues 671 to 749 (EESKKALPPE…GGGGGGSGGI (79 aa)). Arginine 702 carries the post-translational modification Omega-N-methylarginine. The span at 710-728 (GGFNMRGGNFRGGAPGNRG) shows a compositional bias: gly residues. The interval 714 to 739 (MRGGNFRGGAPGNRGGYNRRGNMPQR) is RNA-binding RGG-box. 3 positions are modified to asymmetric dimethylarginine: arginine 715, arginine 720, and arginine 727. Residues arginine 733 and arginine 739 each carry the asymmetric dimethylarginine; alternate modification. Arginine 733 and arginine 739 each carry omega-N-methylarginine; alternate. Arginine 739 is subject to Dimethylated arginine; in A2780 ovarian carcinoma cell line. The span at 739–749 (RGGGGGGSGGI) shows a compositional bias: gly residues. 2 positions are modified to asymmetric dimethylarginine: arginine 755 and arginine 762. Residues 769 to 799 (GNYNRGGMPNRGNYNQNFRGRGNNRGYKNQS) are disordered. Positions 778-799 (NRGNYNQNFRGRGNNRGYKNQS) are enriched in low complexity. An N6-acetyllysine; alternate modification is found at lysine 814. Lysine 814 is covalently cross-linked (Glycyl lysine isopeptide (Lys-Gly) (interchain with G-Cter in SUMO2); alternate).

As to quaternary structure, oligomer (via ATPase domain and RNA-binding RGG-box region); oligomerization occurs upon ATP-binding in a chromatin-associated RNAs (caRNAs)- and transcription-dependent manner and is required for chromatin decompaction. ATP hydrolysis is required to cycle from an oligomeric to monomeric state to compact chromatin. Component of the coding region determinant (CRD)-mediated complex, composed of DHX9, HNRNPU, IGF2BP1, SYNCRIP and YBX1. Identified in the spliceosome C complex. Identified in a IGF2BP1-dependent mRNP granule complex containing untranslated mRNAs. Associates with heterogeneous nuclear ribonucleoprotein (hnRNP) particles. Associates (via middle region) with the C-terminal domain (CTD) RNA polymerase II (Pol II) holoenzyme; this association occurs in a RNA-independent manner. Associates (via middle region) with the core-TFIIH basal transcription factor complex; this association inhibits the CTD phosphorylation of RNA polymerase II holoenzyme by down-regulating TFIIH kinase activity. Associates with the telomerase holoenzyme complex. Associates with spindle microtubules (MTs) in a TPX2-dependent manner. Interacts (via C-terminus) with actin; this interaction is direct and mediates association with the phosphorylated CTD of RNA polymerase II and is disrupted in presence of the long non-coding H19 RNA. Interacts with AURKA. Interacts (via C-terminus) with CBX5; this interaction is, at least in part, RNA-dependent. Interacts with CR2. Interacts with CRY1. Interacts (via C-terminus) with EP300; this interaction enhances DNA-binding to nuclear scaffold/matrix attachment region (S/MAR) elements. Interacts with ERBB4. Interacts with GEMIN5. Interacts with IGF2BP1. Interacts with IGF2BP2 and IGF2BP3. Interacts with NCL; this interaction occurs during mitosis. Interacts (via C-terminus) with NR3C1 (via C-terminus). Interacts with PLK1; this interaction induces phosphorylation of HNRNPU at Ser-59 in mitosis. Interacts with POU3F4. Interacts with SMARCA4; this interaction occurs in embryonic stem cells and stimulates global Pol II-mediated transcription. Interacts (via C-terminus) with TOP2A; this interaction protects the topoisomerase TOP2A from degradation and positively regulates the relaxation of supercoiled DNA by TOP2A in a RNA-dependent manner. Interacts with TPX2; this interaction recruits HNRNPU to spindle microtubules (MTs). Interacts with UBQLN2. Interacts (via RNA-binding RGG-box region) with ZBTB7B; the interaction facilitates the recruitment of long non-coding RNA Blnc1 by ZBTB7B. Interacts with ERCC6. (Microbial infection) Interacts with HIV-1 protein Rev. Post-translationally, cleaved at Asp-100 by CASP3 during T-cell apoptosis, resulting in a loss of DNA- and chromatin-binding activities. In terms of processing, extensively phosphorylated. Phosphorylated on Ser-59 by PLK1 and dephosphorylated by protein phosphatase 2A (PP2A) in mitosis. Arg-739 is dimethylated, probably to asymmetric dimethylarginine. Arg-733 is dimethylated, probably to asymmetric dimethylarginine. Post-translationally, citrullinated by PADI4. In terms of tissue distribution, widely expressed.

The protein localises to the nucleus. The protein resides in the nucleus matrix. Its subcellular location is the chromosome. It is found in the nucleus speckle. It localises to the cytoplasm. The protein localises to the cytoskeleton. The protein resides in the microtubule organizing center. Its subcellular location is the centrosome. It is found in the centromere. It localises to the kinetochore. The protein localises to the spindle. The protein resides in the spindle pole. Its subcellular location is the midbody. It is found in the cell surface. It localises to the cytoplasmic granule. DNA- and RNA-binding protein involved in several cellular processes such as nuclear chromatin organization, telomere-length regulation, transcription, mRNA alternative splicing and stability, Xist-mediated transcriptional silencing and mitotic cell progression. Plays a role in the regulation of interphase large-scale gene-rich chromatin organization through chromatin-associated RNAs (caRNAs) in a transcription-dependent manner, and thereby maintains genomic stability. Required for the localization of the long non-coding Xist RNA on the inactive chromosome X (Xi) and the subsequent initiation and maintenance of X-linked transcriptional gene silencing during X-inactivation. Plays a role as a RNA polymerase II (Pol II) holoenzyme transcription regulator. Promotes transcription initiation by direct association with the core-TFIIH basal transcription factor complex for the assembly of a functional pre-initiation complex with Pol II in a actin-dependent manner. Blocks Pol II transcription elongation activity by inhibiting the C-terminal domain (CTD) phosphorylation of Pol II and dissociates from Pol II pre-initiation complex prior to productive transcription elongation. Positively regulates CBX5-induced transcriptional gene silencing and retention of CBX5 in the nucleus. Negatively regulates glucocorticoid-mediated transcriptional activation. Key regulator of transcription initiation and elongation in embryonic stem cells upon leukemia inhibitory factor (LIF) signaling. Involved in the long non-coding RNA H19-mediated Pol II transcriptional repression. Participates in the circadian regulation of the core clock component BMAL1 transcription. Plays a role in the regulation of telomere length. Plays a role as a global pre-mRNA alternative splicing modulator by regulating U2 small nuclear ribonucleoprotein (snRNP) biogenesis. Plays a role in mRNA stability. Component of the CRD-mediated complex that promotes MYC mRNA stabilization. Enhances the expression of specific genes, such as tumor necrosis factor TNFA, by regulating mRNA stability, possibly through binding to the 3'-untranslated region (UTR). Plays a role in mitotic cell cycle regulation. Involved in the formation of stable mitotic spindle microtubules (MTs) attachment to kinetochore, spindle organization and chromosome congression. Phosphorylation at Ser-59 by PLK1 is required for chromosome alignement and segregation and progression through mitosis. Also contributes to the targeting of AURKA to mitotic spindle MTs. Binds to double- and single-stranded DNA and RNA, poly(A), poly(C) and poly(G) oligoribonucleotides. Binds to chromatin-associated RNAs (caRNAs). Associates with chromatin to scaffold/matrix attachment region (S/MAR) elements in a chromatin-associated RNAs (caRNAs)-dependent manner. Binds to the Xist RNA. Binds the long non-coding H19 RNA. Binds to SMN1/2 pre-mRNAs at G/U-rich regions. Binds to small nuclear RNAs (snRNAs). Binds to the 3'-UTR of TNFA mRNA. Binds (via RNA-binding RGG-box region) to the long non-coding Xist RNA; this binding is direct and bridges the Xist RNA and the inactive chromosome X (Xi). Also negatively regulates embryonic stem cell differentiation upon LIF signaling. Required for embryonic development. Binds to brown fat long non-coding RNA 1 (Blnc1); facilitates the recruitment of Blnc1 by ZBTB7B required to drive brown and beige fat development and thermogenesis. In terms of biological role, (Microbial infection) Negatively regulates immunodeficiency virus type 1 (HIV-1) replication by preventing the accumulation of viral mRNA transcripts in the cytoplasm. This Homo sapiens (Human) protein is Heterogeneous nuclear ribonucleoprotein U.